We begin with the raw amino-acid sequence, 127 residues long: Multifunctional methyltransferase subunit trm112 (127 aa).

One can recognise a TRM112 domain in the interval 2-123 (KVMTLNFLTC…KNGVANFLLP (122 aa)).

The protein belongs to the TRM112 family. Heterodimer of mtq2-rmt-1/trm112, forming the eRF1 methyltransferase. Rmt-1/trm112 is necessary for the solubility and activity of the catalytic subunit mtq2. Interacts with trm11; required for full tRNA methyltransferase activity. Interacts with bud23; required for full rRNA methyltransferase activity.

The protein localises to the cytoplasm. The protein resides in the nucleus. Acts as an activator of both rRNA/tRNA and protein methyltransferases. Together with methyltransferase mtq2, required for the methylation of eRF1 on 'Gln-182'. Together with methyltransferase trm11, required for the formation of 2-methylguanosine at position 10 (m2G10) in tRNA. Together with methyltransferase bud23, required for the formation of a 7-methylguanine in 18S rRNA. Involved in biogenesis of both 40S and 60S ribosomal subunits. The sequence is that of Multifunctional methyltransferase subunit trm112 (rmt-1) from Neurospora crassa (strain ATCC 24698 / 74-OR23-1A / CBS 708.71 / DSM 1257 / FGSC 987).